Consider the following 628-residue polypeptide: tRNA 5-methylaminomethyl-2-thiouridine biosynthesis bifunctional protein MnmC (628 aa).

Residues 1 to 237 (MSSYSPLVPP…KWHMTVGVRE (237 aa)) form a tRNA (mnm(5)s(2)U34)-methyltransferase region. The tract at residues 265–628 (VGGGLAGAGI…ADLLAAVAPR (364 aa)) is FAD-dependent cmnm(5)s(2)U34 oxidoreductase.

This sequence in the N-terminal section; belongs to the methyltransferase superfamily. tRNA (mnm(5)s(2)U34)-methyltransferase family. The protein in the C-terminal section; belongs to the DAO family. FAD is required as a cofactor.

It localises to the cytoplasm. The catalysed reaction is 5-aminomethyl-2-thiouridine(34) in tRNA + S-adenosyl-L-methionine = 5-methylaminomethyl-2-thiouridine(34) in tRNA + S-adenosyl-L-homocysteine + H(+). In terms of biological role, catalyzes the last two steps in the biosynthesis of 5-methylaminomethyl-2-thiouridine (mnm(5)s(2)U) at the wobble position (U34) in tRNA. Catalyzes the FAD-dependent demodification of cmnm(5)s(2)U34 to nm(5)s(2)U34, followed by the transfer of a methyl group from S-adenosyl-L-methionine to nm(5)s(2)U34, to form mnm(5)s(2)U34. The sequence is that of tRNA 5-methylaminomethyl-2-thiouridine biosynthesis bifunctional protein MnmC from Bordetella petrii (strain ATCC BAA-461 / DSM 12804 / CCUG 43448).